The sequence spans 747 residues: Anoctamin-9 (747 aa).

Residues Met-1 to Thr-193 are Cytoplasmic-facing. The chain crosses the membrane as a helical span at residues Tyr-194–Phe-214. Residues Asp-215–Asn-259 are Extracellular-facing. Ser-245 bears the Phosphoserine; by PKA mark. The helical transmembrane segment at Glu-260–Trp-280 threads the bilayer. Over Lys-281–Thr-326 the chain is Cytoplasmic. Residues Ile-327–Val-347 traverse the membrane as a helical segment. Topologically, residues Val-348–Gln-364 are extracellular. The helical transmembrane segment at Val-365–Thr-385 threads the bilayer. At Lys-386–Lys-414 the chain is on the cytoplasmic side. The helical transmembrane segment at Phe-415–Gly-435 threads the bilayer. The Extracellular segment spans residues Arg-436–Thr-543. Residues Ile-544–Ile-564 traverse the membrane as a helical segment. The Cytoplasmic segment spans residues Arg-565–Thr-595. Residues Ile-596–Pro-616 traverse the membrane as a helical segment. Residues Arg-617–Thr-695 lie on the Extracellular side of the membrane. N-linked (GlcNAc...) asparagine glycosylation is found at Asn-630, Asn-643, Asn-665, and Asn-681. A helical transmembrane segment spans residues Phe-696 to Pro-716. Over Asp-717 to Val-747 the chain is Cytoplasmic.

Belongs to the anoctamin family. Post-translationally, phosphorylation on Ser-245 by cAMP-dependent protein kinase A (PKA)is essential for activation of its cation channel activity. As to expression, highly expressed in the olfactory epithelium, particularly in mature olfactory sensory neurons (at protein level). Expressed in the kidney (at protein level). Predominant expression seen in epithelial tissues. Highly expressed in the small intestine, colon and stomach.

It localises to the cell membrane. Its subcellular location is the endoplasmic reticulum. The enzyme catalyses a 1,2-diacyl-sn-glycero-3-phospho-L-serine(in) = a 1,2-diacyl-sn-glycero-3-phospho-L-serine(out). It catalyses the reaction a beta-D-galactosyl-(1&lt;-&gt;1')-N-acylsphing-4-enine(out) = a beta-D-galactosyl-(1&lt;-&gt;1')-N-acylsphing-4-enine(in). The catalysed reaction is a 1,2-diacyl-sn-glycero-3-phosphocholine(in) = a 1,2-diacyl-sn-glycero-3-phosphocholine(out). It carries out the reaction Ca(2+)(in) = Ca(2+)(out). The enzyme catalyses Na(+)(in) = Na(+)(out). It catalyses the reaction K(+)(in) = K(+)(out). Cation channel activity is activated via phosphorylation on Ser-245 by cAMP-dependent protein kinase A (PKA). Inhibited by NaCl. Its function is as follows. PKA-activated nonselective cation channel. Discriminates poorly among cations but is more permeable to Ca(2+) ions than to monovalent cations. Acts as a calcium-activated calcium permeable channel which may operate as a endoplasmic reticulum (ER) Ca(2+)-leak channel, reducing the loading of the ER Ca(2+) store. Regulates intracellular Ca2+ signals, ion channel activity, and cytokine release in the renal tissue. Plays an important role in olfaction, amplifying cAMP-evoked cyclic nucleotide-gated (CNG) channel currents in the olfactory sensory neurons. Has calcium-dependent phospholipid scramblase activity; scrambles phosphatidylserine, phosphatidylcholine and galactosylceramide. Does not exhibit calcium-activated chloride channel (CaCC) activity. Can inhibit the activity of ANO1. The polypeptide is Anoctamin-9 (Mus musculus (Mouse)).